Here is a 486-residue protein sequence, read N- to C-terminus: MTTIRLTNTKTRRKEAFTPIDPANVRLYVCGPTVYDRAHLGNGRPVVVFDVLFRLLRHVYGPDHVTYVRNFTDVDDKINAAAQARKAAGDPRSLEELIRARTDETIRWYHEDMDALGALRPTHEPRATEWIGAMIAMIEDLVARGHAYEREGHVLFRVRSYRDYGALSGRSVDDMIAGARVEVAPFKEDPMDFVLWKPSDDELPGWESPWGRGRPGWHIECSAMSYELLGASFDIHAGGIDLQFPHHENEIAQSCCAHPEGGFANVWMHNEMLLVNGKKMSKSLGNFFTIHDLRKDRGIPGEVIRMVLLGTHYSKPMDWTAEKAAQAKATLWKWRKLTADVEPAASPDAAVLAALADDLNTPAAITRLHSIAAQEDGALLKASASLLGLLEDDLRGWTLPPVTGTGSGVMEVSGSATAIVGSVQYRETIERLLDERKQARMGKDFKRSDAIRDLLVGAGVIIKDTPAGAEWDLGADFDPARLGEPE.

Cys30 is a binding site for Zn(2+). The short motif at 32 to 42 (PTVYDRAHLGN) is the 'HIGH' region element. The Zn(2+) site is built by Cys221, His246, and Glu250. The 'KMSKS' region motif lies at 279–283 (KMSKS). Lys282 provides a ligand contact to ATP.

It belongs to the class-I aminoacyl-tRNA synthetase family. In terms of assembly, monomer. Zn(2+) serves as cofactor.

The protein localises to the cytoplasm. It carries out the reaction tRNA(Cys) + L-cysteine + ATP = L-cysteinyl-tRNA(Cys) + AMP + diphosphate. This is Cysteine--tRNA ligase from Cereibacter sphaeroides (strain ATCC 17025 / ATH 2.4.3) (Rhodobacter sphaeroides).